A 105-amino-acid chain; its full sequence is Large ribosomal subunit protein uL24 (105 aa).

It belongs to the universal ribosomal protein uL24 family. Part of the 50S ribosomal subunit.

Functionally, one of two assembly initiator proteins, it binds directly to the 5'-end of the 23S rRNA, where it nucleates assembly of the 50S subunit. One of the proteins that surrounds the polypeptide exit tunnel on the outside of the subunit. The sequence is that of Large ribosomal subunit protein uL24 from Azoarcus sp. (strain BH72).